The following is a 211-amino-acid chain: Uracil phosphoribosyltransferase (211 aa).

5-phospho-alpha-D-ribose 1-diphosphate is bound by residues arginine 78, arginine 103, and 130 to 138 (DPMLATGNS). Uracil contacts are provided by residues isoleucine 193 and 198 to 200 (GDA). A 5-phospho-alpha-D-ribose 1-diphosphate-binding site is contributed by aspartate 199.

It belongs to the UPRTase family. Mg(2+) serves as cofactor.

The enzyme catalyses UMP + diphosphate = 5-phospho-alpha-D-ribose 1-diphosphate + uracil. It participates in pyrimidine metabolism; UMP biosynthesis via salvage pathway; UMP from uracil: step 1/1. Allosterically activated by GTP. In terms of biological role, catalyzes the conversion of uracil and 5-phospho-alpha-D-ribose 1-diphosphate (PRPP) to UMP and diphosphate. The chain is Uracil phosphoribosyltransferase from Acinetobacter baumannii (strain AB307-0294).